A 350-amino-acid polypeptide reads, in one-letter code: D-guloside 3-dehydrogenase (350 aa).

This sequence belongs to the zinc-containing alcohol dehydrogenase family. Zn(2+) is required as a cofactor.

The catalysed reaction is a D-guloside + NAD(+) = a 3-dehydro-D-guloside + NADH + H(+). Its function is as follows. Catalyzes the NAD(+)-dependent oxidation of the hydroxyl group at C3 of D-gulosides leading to 3-dehydro-D-gulosides. Probably functions in a metabolic pathway that transforms D-gulosides to D-glucosides. Is also able to catalyze the reverse reactions, i.e. the NADH-dependent reduction of the oxo group at C3 of 3-dehydro-D-gulosides leading to D-gulosides. In vitro, can oxidize D-gulose and methyl beta-D-guloside, and reduce methyl alpha-3-dehydro-D-guloside and methyl beta-3-dehydro-D-guloside. However, the actual specific physiological substrates for this metabolic pathway are unknown. This Shigella flexneri protein is D-guloside 3-dehydrogenase (ycjQ).